The chain runs to 166 residues: Ribosomal RNA large subunit methyltransferase H (166 aa).

Residues leucine 85, glycine 116, and 135-140 each bind S-adenosyl-L-methionine; that span reads ISKMTF.

Belongs to the RNA methyltransferase RlmH family. Homodimer.

It localises to the cytoplasm. It carries out the reaction pseudouridine(1915) in 23S rRNA + S-adenosyl-L-methionine = N(3)-methylpseudouridine(1915) in 23S rRNA + S-adenosyl-L-homocysteine + H(+). Functionally, specifically methylates the pseudouridine at position 1915 (m3Psi1915) in 23S rRNA. The sequence is that of Ribosomal RNA large subunit methyltransferase H from Francisella tularensis subsp. holarctica (strain FTNF002-00 / FTA).